The following is a 250-amino-acid chain: DNA repair protein RecO (250 aa).

It belongs to the RecO family.

Its function is as follows. Involved in DNA repair and RecF pathway recombination. The protein is DNA repair protein RecO of Syntrophomonas wolfei subsp. wolfei (strain DSM 2245B / Goettingen).